Reading from the N-terminus, the 334-residue chain is Aspartate carbamoyltransferase catalytic subunit (334 aa).

Residues Arg-71 and Thr-72 each coordinate carbamoyl phosphate. Position 99 (Lys-99) interacts with L-aspartate. Carbamoyl phosphate-binding residues include Arg-121, His-151, and Gln-154. Positions 184 and 239 each coordinate L-aspartate. Carbamoyl phosphate is bound by residues Gly-280 and Pro-281.

The protein belongs to the aspartate/ornithine carbamoyltransferase superfamily. ATCase family. Heterododecamer (2C3:3R2) of six catalytic PyrB chains organized as two trimers (C3), and six regulatory PyrI chains organized as three dimers (R2).

The enzyme catalyses carbamoyl phosphate + L-aspartate = N-carbamoyl-L-aspartate + phosphate + H(+). The protein operates within pyrimidine metabolism; UMP biosynthesis via de novo pathway; (S)-dihydroorotate from bicarbonate: step 2/3. Catalyzes the condensation of carbamoyl phosphate and aspartate to form carbamoyl aspartate and inorganic phosphate, the committed step in the de novo pyrimidine nucleotide biosynthesis pathway. The protein is Aspartate carbamoyltransferase catalytic subunit of Pseudomonas fluorescens biotype A.